Consider the following 615-residue polypeptide: Dihydroxy-acid dehydratase (615 aa).

Asp85 lines the Mg(2+) pocket. Cys126 is a binding site for [2Fe-2S] cluster. Residues Asp127 and Lys128 each contribute to the Mg(2+) site. Residue Lys128 is modified to N6-carboxylysine. Cys199 contacts [2Fe-2S] cluster. A Mg(2+)-binding site is contributed by Glu495. Catalysis depends on Ser521, which acts as the Proton acceptor.

The protein belongs to the IlvD/Edd family. Homodimer. [2Fe-2S] cluster is required as a cofactor. Mg(2+) serves as cofactor.

It catalyses the reaction (2R)-2,3-dihydroxy-3-methylbutanoate = 3-methyl-2-oxobutanoate + H2O. The catalysed reaction is (2R,3R)-2,3-dihydroxy-3-methylpentanoate = (S)-3-methyl-2-oxopentanoate + H2O. It participates in amino-acid biosynthesis; L-isoleucine biosynthesis; L-isoleucine from 2-oxobutanoate: step 3/4. Its pathway is amino-acid biosynthesis; L-valine biosynthesis; L-valine from pyruvate: step 3/4. Functions in the biosynthesis of branched-chain amino acids. Catalyzes the dehydration of (2R,3R)-2,3-dihydroxy-3-methylpentanoate (2,3-dihydroxy-3-methylvalerate) into 2-oxo-3-methylpentanoate (2-oxo-3-methylvalerate) and of (2R)-2,3-dihydroxy-3-methylbutanoate (2,3-dihydroxyisovalerate) into 2-oxo-3-methylbutanoate (2-oxoisovalerate), the penultimate precursor to L-isoleucine and L-valine, respectively. The polypeptide is Dihydroxy-acid dehydratase (Mannheimia succiniciproducens (strain KCTC 0769BP / MBEL55E)).